Reading from the N-terminus, the 126-residue chain is Large ribosomal subunit protein bL12 (126 aa).

The tract at residues 97-126 is disordered; sequence PQPVKSGVSKEEAEEAKKQLAESGAEVEVK. A compositionally biased stretch (basic and acidic residues) spans 104 to 116; sequence VSKEEAEEAKKQL.

This sequence belongs to the bacterial ribosomal protein bL12 family. Homodimer. Part of the ribosomal stalk of the 50S ribosomal subunit. Forms a multimeric L10(L12)X complex, where L10 forms an elongated spine to which 2 to 4 L12 dimers bind in a sequential fashion. Binds GTP-bound translation factors.

In terms of biological role, forms part of the ribosomal stalk which helps the ribosome interact with GTP-bound translation factors. Is thus essential for accurate translation. The polypeptide is Large ribosomal subunit protein bL12 (Geotalea uraniireducens (strain Rf4) (Geobacter uraniireducens)).